Reading from the N-terminus, the 109-residue chain is Cell division suppressor protein YneA (109 aa).

Residues 39-90 (SEVNVNEGDSLWALADQYAGKSDMAKADFVSWVEKENNLSDGHVEAGDSVVI) form the LysM domain.

The protein belongs to the YneA family.

It localises to the cytoplasm. Its function is as follows. Inhibits cell division during the SOS response. Affects a later stage of the cell division protein assembly, after the assembly of the Z ring, by probably suppressing recruitment of FtsL and/or DivIC to the division machinery. In Listeria monocytogenes serovar 1/2a (strain ATCC BAA-679 / EGD-e), this protein is Cell division suppressor protein YneA.